A 177-amino-acid chain; its full sequence is Probable prophage lysozyme (177 aa).

Glu35 acts as the Proton donor in catalysis. The active-site Nucleophile is Asp44.

Belongs to the glycosyl hydrolase 24 family.

The enzyme catalyses Hydrolysis of (1-&gt;4)-beta-linkages between N-acetylmuramic acid and N-acetyl-D-glucosamine residues in a peptidoglycan and between N-acetyl-D-glucosamine residues in chitodextrins.. Functionally, essential for lysis of bacterial cell wall, by showing cell wall hydrolyzing activity. This is Probable prophage lysozyme (rrrQ) from Escherichia coli (strain K12).